A 483-amino-acid polypeptide reads, in one-letter code: Regulatory protein ViaA (483 aa).

It belongs to the ViaA family. In terms of assembly, homodimer. Interacts with RavA.

It is found in the cytoplasm. Component of the RavA-ViaA chaperone complex, which may act on the membrane to optimize the function of some of the respiratory chains. ViaA stimulates the ATPase activity of RavA. The chain is Regulatory protein ViaA from Shigella flexneri.